The chain runs to 189 residues: Small ribosomal subunit protein uS7 (189 aa).

This sequence belongs to the universal ribosomal protein uS7 family. Part of the 30S ribosomal subunit.

In terms of biological role, one of the primary rRNA binding proteins, it binds directly to 16S rRNA where it nucleates assembly of the head domain of the 30S subunit. Is located at the subunit interface close to the decoding center. The protein is Small ribosomal subunit protein uS7 of Methanosarcina mazei (strain ATCC BAA-159 / DSM 3647 / Goe1 / Go1 / JCM 11833 / OCM 88) (Methanosarcina frisia).